The chain runs to 39 residues: MWAAKLIVVTLLLLQFAALALSCSCGEEAKLECGCTKHH.

As to expression, in bundles of maturing sperm of larval, pupal and adult males.

In Drosophila melanogaster (Fruit fly), this protein is Gonadal protein gdl-ORF39 (gdl-ORF39).